Here is a 109-residue protein sequence, read N- to C-terminus: Non-structural protein of 12.7 kDa (109 aa).

This sequence belongs to the coronaviruses ns12.7 protein family.

In Sus scrofa (Pig), this protein is Non-structural protein of 12.7 kDa.